The following is a 445-amino-acid chain: MAVAIAAARVWRPNRGLSQAALLLLWRPGARGLARSHPHRQQQQFSSLDDKPQFPGASAEFIDKLEFIQPNVISGIPIYRVMDRQGQIINPSEDPHLPKEKVLKLYKSMTLLNTMDRILYESQRQGRISFYMTNYGEEGTHVGSAAALDNTDLVFGQYREAGVLMYRDYPLELFMAQCYGNISDLGKGRQMPVHYGCKERHFVTISSPLATQIPQAVGAAYAAKRANANRVVICYFGEGAASEGDAHAGFNFAATLECPIIFFCRNNGYAISTPTSEQYRGDGIAARGPGYGIMSIRVDGNDVFAVYNATKEARRRAVAENQPFLIEAMTYRIGHHSTSDDSSAYRSVDEVNYWDKQDHPISRLRHYLLSQGWWDEEQEKAWRKQSRKKVMKAFEQAERKPKPNPNLLFSDVYQEMPAQLRKQQESLARHLQTYGEHYPLEHFDK.

A mitochondrion-targeting transit peptide spans 1–45 (MAVAIAAARVWRPNRGLSQAALLLLWRPGARGLARSHPHRQQQQF). Thiamine diphosphate-binding residues include Tyr158 and Arg159. A K(+)-binding site is contributed by Ser206. Thiamine diphosphate is bound at residue Ser207. Residues Pro208, Thr211, and Gln212 each coordinate K(+). Residue Glu238 participates in Mg(2+) binding. Residues Gly239, Ala240, and Arg265 each coordinate thiamine diphosphate. 2 residues coordinate Mg(2+): Asn267 and Tyr269. Residue His336 participates in thiamine diphosphate binding. Ser337 bears the Phosphoserine; by BCKDK mark. Thr338 is subject to Phosphothreonine. Residues Ser339 and Ser347 each carry the phosphoserine modification. At Lys356 the chain carries N6-acetyllysine; alternate. N6-succinyllysine; alternate is present on Lys356. Residue Lys380 is modified to N6-succinyllysine.

It belongs to the BCKDHA family. In terms of assembly, heterotetramer of 2 alpha/BCKDHA and 2 beta chains/BCKDHB that forms the branched-chain alpha-keto acid decarboxylase (E1) component of the BCKD complex. The branched-chain alpha-ketoacid dehydrogenase is a large complex composed of three major building blocks E1, E2 and E3. It is organized around E2, a 24-meric cubic core composed of DBT, to which are associated 6 to 12 copies of E1, and approximately 6 copies of the dehydrogenase E3, a DLD dimer. Interacts with PPM1K. Thiamine diphosphate is required as a cofactor. The cofactor is Mg(2+). Post-translationally, phosphorylated at Ser-337 by BCKDK and dephosphorylated by protein phosphatase PPM1K.

The protein resides in the mitochondrion matrix. The catalysed reaction is N(6)-[(R)-lipoyl]-L-lysyl-[protein] + 3-methyl-2-oxobutanoate + H(+) = N(6)-[(R)-S(8)-2-methylpropanoyldihydrolipoyl]-L-lysyl-[protein] + CO2. Functionally, together with BCKDHB forms the heterotetrameric E1 subunit of the mitochondrial branched-chain alpha-ketoacid dehydrogenase (BCKD) complex. The BCKD complex catalyzes the multi-step oxidative decarboxylation of alpha-ketoacids derived from the branched-chain amino-acids valine, leucine and isoleucine producing CO2 and acyl-CoA which is subsequently utilized to produce energy. The E1 subunit catalyzes the first step with the decarboxylation of the alpha-ketoacid forming an enzyme-product intermediate. A reductive acylation mediated by the lipoylamide cofactor of E2 extracts the acyl group from the E1 active site for the next step of the reaction. The chain is 2-oxoisovalerate dehydrogenase subunit alpha, mitochondrial (BCKDHA) from Macaca fascicularis (Crab-eating macaque).